The chain runs to 66 residues: Large ribosomal subunit protein bL32 (66 aa).

The protein belongs to the bacterial ribosomal protein bL32 family.

This chain is Large ribosomal subunit protein bL32, found in Acetivibrio thermocellus (strain ATCC 27405 / DSM 1237 / JCM 9322 / NBRC 103400 / NCIMB 10682 / NRRL B-4536 / VPI 7372) (Clostridium thermocellum).